Consider the following 254-residue polypeptide: NH(3)-dependent NAD(+) synthetase (254 aa).

Residue 32-39 (GISGGIDS) coordinates ATP. Aspartate 38 serves as a coordination point for Mg(2+). Arginine 113 provides a ligand contact to deamido-NAD(+). Threonine 133 is an ATP binding site. Glutamate 138 contributes to the Mg(2+) binding site. Positions 146 and 153 each coordinate deamido-NAD(+). ATP-binding residues include lysine 162 and threonine 184. 244-245 (HK) serves as a coordination point for deamido-NAD(+).

Belongs to the NAD synthetase family. Homodimer.

The catalysed reaction is deamido-NAD(+) + NH4(+) + ATP = AMP + diphosphate + NAD(+) + H(+). It participates in cofactor biosynthesis; NAD(+) biosynthesis; NAD(+) from deamido-NAD(+) (ammonia route): step 1/1. Catalyzes the ATP-dependent amidation of deamido-NAD to form NAD. Uses ammonia as a nitrogen source. The chain is NH(3)-dependent NAD(+) synthetase from Thermococcus kodakarensis (strain ATCC BAA-918 / JCM 12380 / KOD1) (Pyrococcus kodakaraensis (strain KOD1)).